The chain runs to 1357 residues: DNA-directed RNA polymerase subunit beta (1357 aa).

The protein belongs to the RNA polymerase beta chain family. As to quaternary structure, the RNAP catalytic core consists of 2 alpha, 1 beta, 1 beta' and 1 omega subunit. When a sigma factor is associated with the core the holoenzyme is formed, which can initiate transcription.

The enzyme catalyses RNA(n) + a ribonucleoside 5'-triphosphate = RNA(n+1) + diphosphate. In terms of biological role, DNA-dependent RNA polymerase catalyzes the transcription of DNA into RNA using the four ribonucleoside triphosphates as substrates. The sequence is that of DNA-directed RNA polymerase subunit beta from Acinetobacter baumannii (strain ATCC 17978 / DSM 105126 / CIP 53.77 / LMG 1025 / NCDC KC755 / 5377).